Consider the following 251-residue polypeptide: Probable transcriptional regulatory protein Cpar_0525 (251 aa).

It belongs to the TACO1 family.

Its subcellular location is the cytoplasm. The sequence is that of Probable transcriptional regulatory protein Cpar_0525 from Chlorobaculum parvum (strain DSM 263 / NCIMB 8327) (Chlorobium vibrioforme subsp. thiosulfatophilum).